Here is an 823-residue protein sequence, read N- to C-terminus: Protein Jade-3 (823 aa).

The segment at 1–40 (MKRHRPVSSSESSDECPSTSFTSSSMYRKKSKNPKEQKKS) is disordered. Over residues 8–20 (SSSESSDECPSTS) the composition is skewed to low complexity. 3 positions are modified to N6-acetyllysine: lysine 30, lysine 32, and lysine 35. A PHD-type 1 zinc finger spans residues 200 to 250 (DVICDVCRSPDSEEGNDMVFCDKCNVCVHQACYGILKIPEGSWLCRSCVLG). The segment at 252-286 (YPQCVLCPKKGGAMKTTRTGTKWAHVSCALWIPEV) adopts a C2HC pre-PHD-type zinc-finger fold. Residues 310-366 (LVCNLCKLKTGACIQCSVKSCITAFHVTCAFEHGLEMKTILDEGDEVKFKSFCLKHS) form a PHD-type 2 zinc finger. Disordered regions lie at residues 543-585 (LKMP…PEEP) and 601-631 (KSNC…AEFY). Over residues 549-562 (TSEDCKDSSTETEH) the composition is skewed to basic and acidic residues. Phosphoserine occurs at positions 566 and 578. Lysine 601 carries the N6-acetyllysine modification. Serine 608 bears the Phosphoserine mark. Lysine 638 is subject to N6-acetyllysine. A disordered region spans residues 651-676 (SIGNGKNQPNSRVSSSNGLEGNWSGN). Lysine 735 carries the post-translational modification N6-acetyllysine. Positions 756 to 823 (TGRASYQETD…HPHSHSSMQR (68 aa)) are disordered. Residues serine 774 and serine 776 each carry the phosphoserine modification. Over residues 781–809 (EGSKETPRVKRESSDRENPSHDSARECHG) the composition is skewed to basic and acidic residues.

It belongs to the JADE family. As to quaternary structure, component of the HBO1 complex composed at least of ING4 or ING5, MYST2/HBO1, MEAF6, and one of JADE1, JADE2 and JADE3.

In terms of biological role, scaffold subunit of some HBO1 complexes, which have a histone H4 acetyltransferase activity. This Mus musculus (Mouse) protein is Protein Jade-3 (Jade3).